The following is a 449-amino-acid chain: Putative gustatory receptor 77a (449 aa).

At 1–27 (MPLPLGDPLALAVSPQLGYIRITAMPR) the chain is on the cytoplasmic side. Residues 28–50 (WLQLPGMSALGILYSLTRVFGLM) traverse the membrane as a helical segment. Residues 51–70 (ATANWSPRGIKRVRQSLYLR) lie on the Extracellular side of the membrane. Residues 71–93 (IHGCVMLIFVGCFSPFAFWCIFQ) traverse the membrane as a helical segment. Topologically, residues 94–102 (RMAFLRQNR) are cytoplasmic. The chain crosses the membrane as a helical span at residues 103 to 125 (ILLMIGFNRYVLLLVCAFMTLWI). Residues 126 to 205 (HCFKQAEIIG…VRRNFMYACS (80 aa)) are Extracellular-facing. A helical transmembrane segment spans residues 206–228 (LVFVSVCQAILQLSLGMYTMAIL). Residues 229–298 (FLGHLVRHSN…LLKLHRSICS (70 aa)) lie on the Cytoplasmic side of the membrane. The helical transmembrane segment at 299–321 (LCAVQAVCFLGFVPLECTIHLFF) threads the bilayer. At 322–340 (TYFMKYSKFILRKYGRSFP) the chain is on the extracellular side. The helical transmembrane segment at 341-363 (LNYFAIAFLVGLFTNLLLVILPT) threads the bilayer. Over 364-420 (YYSERRFNCTREIIKGGGLAFPSRITVKQLRHTMHFYGLYLKNVEHVFAVSACGLFK) the chain is Cytoplasmic. A helical membrane pass occupies residues 421–443 (LNNAILFCIVGAILEYLMILIQF). Residues 444–449 (DKVLNK) are Extracellular-facing.

The protein belongs to the insect chemoreceptor superfamily. Gustatory receptor (GR) family. Gr77a subfamily. As to expression, in larvae, is expressed in dorsal pharyngeal sense organ.

Its subcellular location is the cell membrane. Its function is as follows. Probable gustatory receptor which mediates acceptance or avoidance behavior, depending on its substrates. This Drosophila melanogaster (Fruit fly) protein is Putative gustatory receptor 77a (Gr77a).